We begin with the raw amino-acid sequence, 299 residues long: ATP synthase gamma chain (299 aa).

Belongs to the ATPase gamma chain family. F-type ATPases have 2 components, CF(1) - the catalytic core - and CF(0) - the membrane proton channel. CF(1) has five subunits: alpha(3), beta(3), gamma(1), delta(1), epsilon(1). CF(0) has three main subunits: a, b and c.

The protein localises to the cell membrane. In terms of biological role, produces ATP from ADP in the presence of a proton gradient across the membrane. The gamma chain is believed to be important in regulating ATPase activity and the flow of protons through the CF(0) complex. The protein is ATP synthase gamma chain of Levilactobacillus brevis (strain ATCC 367 / BCRC 12310 / CIP 105137 / JCM 1170 / LMG 11437 / NCIMB 947 / NCTC 947) (Lactobacillus brevis).